The primary structure comprises 562 residues: Probable sesquiterpene synthase (562 aa).

3 residues coordinate Mg(2+): D315, D319, and E467. The DDXXD motif motif lies at 315–319 (DDIYD).

The protein belongs to the terpene synthase family. Tpsa subfamily. Mg(2+) serves as cofactor. It depends on Mn(2+) as a cofactor.

Its function is as follows. Sesquiterpene synthase. This Santalum spicatum (Australian sandalwood) protein is Probable sesquiterpene synthase (SesquiTPS).